The primary structure comprises 240 residues: Uridylate kinase (240 aa).

ATP is bound at residue 12–15 (KLSG). The tract at residues 20–25 (GDKGFG) is involved in allosteric activation by GTP. Gly-54 contributes to the UMP binding site. Positions 55 and 59 each coordinate ATP. Residues Asp-74 and 135–142 (TGSPYFST) contribute to the UMP site. ATP contacts are provided by Asn-163, Tyr-169, and Asp-172.

It belongs to the UMP kinase family. Homohexamer.

It is found in the cytoplasm. It catalyses the reaction UMP + ATP = UDP + ADP. The protein operates within pyrimidine metabolism; CTP biosynthesis via de novo pathway; UDP from UMP (UMPK route): step 1/1. Allosterically activated by GTP. Inhibited by UTP. Functionally, catalyzes the reversible phosphorylation of UMP to UDP. This is Uridylate kinase from Limosilactobacillus reuteri (strain DSM 20016) (Lactobacillus reuteri).